A 106-amino-acid chain; its full sequence is Small ribosomal subunit protein uS10 (106 aa).

This sequence belongs to the universal ribosomal protein uS10 family. As to quaternary structure, part of the 30S ribosomal subunit.

Involved in the binding of tRNA to the ribosomes. This Pyrobaculum calidifontis (strain DSM 21063 / JCM 11548 / VA1) protein is Small ribosomal subunit protein uS10.